Here is a 222-residue protein sequence, read N- to C-terminus: Glutathione-specific gamma-glutamylcyclotransferase 1 (222 aa).

Residues 1–25 (MKQESAAQSTPPPSLSPAPSAQPSW) form a disordered region. Residue 35 to 40 (IFGYGS) coordinates substrate. The Proton acceptor role is filled by Glu-115.

It belongs to the gamma-glutamylcyclotransferase family. ChaC subfamily. Interacts with NOTCH1 (via extracellular region).

It localises to the cytoplasm. Its subcellular location is the cytosol. It is found in the golgi apparatus. The protein resides in the trans-Golgi network. It carries out the reaction glutathione = L-cysteinylglycine + 5-oxo-L-proline. Functionally, catalyzes the cleavage of glutathione into 5-oxo-L-proline and a Cys-Gly dipeptide. Acts specifically on glutathione, but not on other gamma-glutamyl peptides. Glutathione depletion is an important factor for apoptosis initiation and execution. Acts as a pro-apoptotic component of the unfolded protein response pathway by mediating the pro-apoptotic effects of the ATF4-ATF3-DDIT3/CHOP cascade. Negative regulator of Notch signaling pathway involved in embryonic neurogenesis: acts by inhibiting Notch cleavage by furin, maintaining Notch in an immature inactive form, thereby promoting neurogenesis in embryos. This chain is Glutathione-specific gamma-glutamylcyclotransferase 1, found in Rattus norvegicus (Rat).